Reading from the N-terminus, the 235-residue chain is Large ribosomal subunit protein uL1 (235 aa).

It belongs to the universal ribosomal protein uL1 family. Part of the 50S ribosomal subunit.

Its function is as follows. Binds directly to 23S rRNA. The L1 stalk is quite mobile in the ribosome, and is involved in E site tRNA release. Protein L1 is also a translational repressor protein, it controls the translation of the L11 operon by binding to its mRNA. This chain is Large ribosomal subunit protein uL1, found in Rhodospirillum centenum (strain ATCC 51521 / SW).